A 485-amino-acid chain; its full sequence is Putative phosphoethanolamine transferase HI_1064 (485 aa).

The next 4 membrane-spanning stretches (helical) occupy residues 33-53 (ILPALFAVICAAFAGYFILIG), 55-75 (GMFTEPSVALILLATITILLL), 81-101 (SFYFILLPLTLLHAFYTPTGL), and 125-145 (FLLQIPVSSYLIAFAIPILIF).

The protein belongs to the phosphoethanolamine transferase family.

It localises to the cell membrane. This is Putative phosphoethanolamine transferase HI_1064 from Haemophilus influenzae (strain ATCC 51907 / DSM 11121 / KW20 / Rd).